Here is a 209-residue protein sequence, read N- to C-terminus: Thiamine-phosphate synthase (209 aa).

4-amino-2-methyl-5-(diphosphooxymethyl)pyrimidine-binding positions include 38-42 (QYRDK) and Asn70. Asp71 and Asp89 together coordinate Mg(2+). Thr108 contacts 4-amino-2-methyl-5-(diphosphooxymethyl)pyrimidine. 135–137 (SNT) contacts 2-[(2R,5Z)-2-carboxy-4-methylthiazol-5(2H)-ylidene]ethyl phosphate. Lys138 is a binding site for 4-amino-2-methyl-5-(diphosphooxymethyl)pyrimidine. Gly165 lines the 2-[(2R,5Z)-2-carboxy-4-methylthiazol-5(2H)-ylidene]ethyl phosphate pocket.

This sequence belongs to the thiamine-phosphate synthase family. Mg(2+) is required as a cofactor.

It catalyses the reaction 2-[(2R,5Z)-2-carboxy-4-methylthiazol-5(2H)-ylidene]ethyl phosphate + 4-amino-2-methyl-5-(diphosphooxymethyl)pyrimidine + 2 H(+) = thiamine phosphate + CO2 + diphosphate. It carries out the reaction 2-(2-carboxy-4-methylthiazol-5-yl)ethyl phosphate + 4-amino-2-methyl-5-(diphosphooxymethyl)pyrimidine + 2 H(+) = thiamine phosphate + CO2 + diphosphate. The catalysed reaction is 4-methyl-5-(2-phosphooxyethyl)-thiazole + 4-amino-2-methyl-5-(diphosphooxymethyl)pyrimidine + H(+) = thiamine phosphate + diphosphate. Its pathway is cofactor biosynthesis; thiamine diphosphate biosynthesis; thiamine phosphate from 4-amino-2-methyl-5-diphosphomethylpyrimidine and 4-methyl-5-(2-phosphoethyl)-thiazole: step 1/1. Its function is as follows. Condenses 4-methyl-5-(beta-hydroxyethyl)thiazole monophosphate (THZ-P) and 2-methyl-4-amino-5-hydroxymethyl pyrimidine pyrophosphate (HMP-PP) to form thiamine monophosphate (TMP). The chain is Thiamine-phosphate synthase from Ectopseudomonas mendocina (strain ymp) (Pseudomonas mendocina).